The sequence spans 498 residues: E3 ubiquitin-protein ligase TRIM22 (498 aa).

An RING-type zinc finger spans residues 15 to 60 (CPICLELLTEPLSLDCGHSFCQACITAKIKESVIISRGESSCPVCQ). The B box-type zinc finger occupies 92–133 (QKRDVCEHHGKKLQIFCKEDGKVICWVCELSQEHQGHQTFRI). Cys-97, His-100, Cys-119, and His-125 together coordinate Zn(2+). The stretch at 132 to 248 (RINEVVKECQ…RRLRGSSVEM (117 aa)) forms a coiled coil. The short motif at 257–275 (KRSESWTLKKPKSVSKKLK) is the Nuclear localization signal element. The 216-residue stretch at 283 to 498 (LSGMLQVLKE…VPMTVCPPSS (216 aa)) folds into the B30.2/SPRY domain.

The protein belongs to the TRIM/RBCC family. As to quaternary structure, homotrimer. In terms of assembly, (Microbial infection) Interacts with HIV-1 Gag polyprotein; this interaction seems to reduce gag production or virus budding. (Microbial infection) Interacts with EMCV protease 3C; this interaction leads to viral protease ubiquitination. Post-translationally, auto-ubiquitinated. As to expression, strongly expressed in peripheral blood leukocytes, spleen, thymus, and ovary. Expressed at basal levels in other tissues.

The protein resides in the cytoplasm. It localises to the nucleus. Its subcellular location is the nucleus speckle. It is found in the cajal body. The catalysed reaction is S-ubiquitinyl-[E2 ubiquitin-conjugating enzyme]-L-cysteine + [acceptor protein]-L-lysine = [E2 ubiquitin-conjugating enzyme]-L-cysteine + N(6)-ubiquitinyl-[acceptor protein]-L-lysine.. The protein operates within protein modification; protein ubiquitination. Functionally, interferon-induced E3 ubiquitin ligase that plays important roles in innate and adaptive immunity. Restricts the replication of many viruses including HIV-1, encephalomyocarditis virus (EMCV), hepatitis B virus (HBV), hepatitis C virus (HCV) or Zika virus (ZIKV). Mechanistically, negatively regulates HCV replication by promoting ubiquitination and subsequent degradation of viral NS5A. Also acts by promoting the degradation of Zika virus NS1 and NS3 proteins through proteasomal degradation. Acts as a suppressor of basal HIV-1 LTR-driven transcription by preventing Sp1 binding to the HIV-1 promoter. Also plays a role in antiviral immunity by co-regulating together with NT5C2 the RIGI/NF-kappa-B pathway by promoting 'Lys-63'-linked ubiquitination of RIGI, while NT5C2 is responsible for 'Lys-48'-linked ubiquitination of RIGI. Participates in adaptive immunity by suppressing the amount of MHC class II protein in a negative feedback manner in order to limit the extent of MHC class II induction. This chain is E3 ubiquitin-protein ligase TRIM22 (TRIM22), found in Homo sapiens (Human).